The primary structure comprises 192 residues: uncharacterized protein (192 aa).

The Nudix hydrolase domain occupies 29–160 (HRQAAVLIPI…PLDIYRRGDS (132 aa)). The Nudix box signature appears at 67-89 (GAVDDTDASVIAAALREAEEEVA). 2 residues coordinate Mg(2+): glutamate 83 and glutamate 87.

Belongs to the Nudix hydrolase family. PCD1 subfamily. Mn(2+) is required as a cofactor. Requires Mg(2+) as cofactor.

Its function is as follows. Probably mediates the hydrolysis of some nucleoside diphosphate derivatives. This is an uncharacterized protein from Shigella boydii serotype 4 (strain Sb227).